A 409-amino-acid chain; its full sequence is Arginine deiminase (409 aa).

Residue Cys399 is the Amidino-cysteine intermediate of the active site.

It belongs to the arginine deiminase family.

Its subcellular location is the cytoplasm. It carries out the reaction L-arginine + H2O = L-citrulline + NH4(+). Its pathway is amino-acid degradation; L-arginine degradation via ADI pathway; carbamoyl phosphate from L-arginine: step 1/2. This Streptococcus gordonii (strain Challis / ATCC 35105 / BCRC 15272 / CH1 / DL1 / V288) protein is Arginine deiminase.